The following is a 140-amino-acid chain: MPTINQLVRNGRTDKVWKSKSPALNKGFNSLKKKSTDISAPQKRGVCTRVGTMTPKKPNSALRKYARVRLTNGIEVTAYIPGIGHNLQEHSVVLIRGGRVKDLPGVRYHIVRGALDTAGVDKRMQGRSKYGTKKPKAAKK.

Asp-102 carries the 3-methylthioaspartic acid modification.

This sequence belongs to the universal ribosomal protein uS12 family. In terms of assembly, part of the 30S ribosomal subunit. Contacts proteins S8 and S17. May interact with IF1 in the 30S initiation complex.

Its function is as follows. With S4 and S5 plays an important role in translational accuracy. Functionally, interacts with and stabilizes bases of the 16S rRNA that are involved in tRNA selection in the A site and with the mRNA backbone. Located at the interface of the 30S and 50S subunits, it traverses the body of the 30S subunit contacting proteins on the other side and probably holding the rRNA structure together. The combined cluster of proteins S8, S12 and S17 appears to hold together the shoulder and platform of the 30S subunit. This chain is Small ribosomal subunit protein uS12, found in Bacillus anthracis (strain A0248).